Consider the following 631-residue polypeptide: MRRPKKYEAGEATQYISRRAALRKLQLSLNDFRRLCILKGVYPREPKHRRRAQKGSSEIKILYHTKDIRFLLHEPIVWTLRDYKIFAKKSGRDRAIKDFRNLKRRLALFPEIKLDHIVKERYPTFIDALKDLDDCLTLLFLFSTFPSLHLIPREQSNLCRRLTIEFLHYVIASKSLRKVFISIKGYYFQAEIKGQKVTWIVPHYYPFKPQSRQEVDFKVMSIFVEFYTIMLGFTNYRLYHGLNLAYPPQFPSSMLQDNEETLKDETSFVSERIAALNFELLRTDKVQEDEEEPDIDMELLEQDGDSKRIIKMKQEAQEIARLRNLFKGLKFFINREVPREPLVIIIRSFGGKVSWDSSVFSGSTYDESDETITHQIVDRPSLSTQYISRDYIQPQWVFDCVNQRQLLPTNKYFLGEELPPHLSPFVDAKRDTYVPPEEKALHDPSLIETHAQSDDESDEEEAAQNEDDTVDQELLDAQLQRAYQQETAEYKKYGGPDGVNEDEEDTDDDFDGEQESDEEEEELDEKTKRLQEEKKKMSVQSGKVHKVNKRQLHKAEVDEHRLQARMVKPRHRNLFRKLIREKQSKEKEEWLLRKKRRNIDNDTKEAKKLVKREAKKAAAAAAAAASQLGVK.

One can recognise a BRCT domain in the interval 321-414 (RLRNLFKGLK…QLLPTNKYFL (94 aa)). Disordered stretches follow at residues 450 to 469 (HAQS…EDDT) and 489 to 569 (EYKK…MVKP). A phosphoserine mark is found at Ser453 and Ser457. Acidic residues-rich tracts occupy residues 454–469 (DDES…EDDT) and 499–524 (VNED…EELD). A coiled-coil region spans residues 510 to 541 (FDGEQESDEEEEELDEKTKRLQEEKKKMSVQS). Basic and acidic residues predominate over residues 525-536 (EKTKRLQEEKKK). The span at 543–552 (KVHKVNKRQL) shows a compositional bias: basic residues. Over residues 553 to 562 (HKAEVDEHRL) the composition is skewed to basic and acidic residues.

Belongs to the pescadillo family.

Its subcellular location is the nucleus. The protein resides in the nucleolus. It localises to the nucleoplasm. In terms of biological role, required for maturation of ribosomal RNAs and formation of the large ribosomal subunit. This Drosophila mojavensis (Fruit fly) protein is Pescadillo homolog.